The following is a 173-amino-acid chain: Adenine phosphoribosyltransferase (173 aa).

This sequence belongs to the purine/pyrimidine phosphoribosyltransferase family. As to quaternary structure, homodimer.

The protein resides in the cytoplasm. It carries out the reaction AMP + diphosphate = 5-phospho-alpha-D-ribose 1-diphosphate + adenine. The protein operates within purine metabolism; AMP biosynthesis via salvage pathway; AMP from adenine: step 1/1. In terms of biological role, catalyzes a salvage reaction resulting in the formation of AMP, that is energically less costly than de novo synthesis. The chain is Adenine phosphoribosyltransferase from Chloroflexus aurantiacus (strain ATCC 29366 / DSM 635 / J-10-fl).